Reading from the N-terminus, the 519-residue chain is Sugar transport protein MST5 (519 aa).

The Cytoplasmic portion of the chain corresponds to 1 to 18; that stretch reads MAGGAMVQTVGGKTYPGK. The helical transmembrane segment at 19–39 threads the bilayer; it reads MTAFVFFTCLVASSGGLIFGY. Topologically, residues 40 to 80 are extracellular; that stretch reads DIGISGGVTSMDSFLSEFFPSVYAQAKASKDTNQYCKFDSQ. A helical transmembrane segment spans residues 81–101; that stretch reads LLTLFTSSLYLAALATSFVAA. The Cytoplasmic segment spans residues 102–110; it reads WVTRVFGRK. Residues 111–127 traverse the membrane as a helical segment; it reads WSMFCGGVTFLAGSALN. Glycine 128 is a topological domain (extracellular). The chain crosses the membrane as a helical span at residues 129-149; it reads AATDVMMLILGRILLGIGVGF. Over 150–167 the chain is Cytoplasmic; that stretch reads ANQSVPLYLSEMAPANLR. Residues 168–188 form a helical membrane-spanning segment; it reads GMLNIGFQLMTTIGILSANLI. Topologically, residues 189 to 202 are extracellular; sequence NYATSSIEGGWGWR. The helical transmembrane segment at 203 to 223 threads the bilayer; the sequence is IGLGLAGVPALIITLGALVLP. Topologically, residues 224 to 295 are cytoplasmic; that stretch reads DTPNSLIARG…IAILIPCFQQ (72 aa). The helical transmembrane segment at 296–316 threads the bilayer; sequence LTGINVIMFYAPVLFLTIGFA. The Extracellular segment spans residues 317–321; it reads GDASL. A helical membrane pass occupies residues 322 to 342; it reads MSAVITGLVNMFATVVSIISV. Residues 343 to 357 are Cytoplasmic-facing; it reads DRLGRRVLFLQGGTQ. Residues 358–378 form a helical membrane-spanning segment; sequence MFISQVVVGTLIALQFGVAGV. Residues 379–386 lie on the Extracellular side of the membrane; sequence GEMSRSYA. A helical transmembrane segment spans residues 387–407; sequence ILLVLFICMYVAGFAWSWGPL. Topologically, residues 408–426 are cytoplasmic; the sequence is GWLVPSEVFALEIRSAGQS. The helical transmembrane segment at 427–447 threads the bilayer; the sequence is IAVCVNMMLTFVIGQAFLTML. Over 448–451 the chain is Extracellular; that stretch reads CHLK. Residues 452–472 traverse the membrane as a helical segment; sequence FGLFYFFAGWMLVMTTFVALF. The Cytoplasmic portion of the chain corresponds to 473–519; sequence LPETKGVPIEEMNHVWSRHWFWGSYVTAHDVAGAGAGGGGNRRSHNV.

It belongs to the major facilitator superfamily. Sugar transporter (TC 2.A.1.1) family. Expressed in panicles before heading. Expressed in flowers before pollination.

The protein resides in the membrane. Its function is as follows. Mediates active uptake of hexoses by sugar:proton symport. Can transport glucose, xylose and 3-O-methylglucose. May play a role at the early stage of seed development. The chain is Sugar transport protein MST5 from Oryza sativa subsp. japonica (Rice).